Here is a 165-residue protein sequence, read N- to C-terminus: Large ribosomal subunit protein uL10 (165 aa).

Belongs to the universal ribosomal protein uL10 family. Part of the ribosomal stalk of the 50S ribosomal subunit. The N-terminus interacts with L11 and the large rRNA to form the base of the stalk. The C-terminus forms an elongated spine to which L12 dimers bind in a sequential fashion forming a multimeric L10(L12)X complex.

Its function is as follows. Forms part of the ribosomal stalk, playing a central role in the interaction of the ribosome with GTP-bound translation factors. This chain is Large ribosomal subunit protein uL10, found in Mycoplasmopsis synoviae (strain 53) (Mycoplasma synoviae).